A 485-amino-acid chain; its full sequence is Aspartyl/glutamyl-tRNA(Asn/Gln) amidotransferase subunit B (485 aa).

This sequence belongs to the GatB/GatE family. GatB subfamily. As to quaternary structure, heterotrimer of A, B and C subunits.

The enzyme catalyses L-glutamyl-tRNA(Gln) + L-glutamine + ATP + H2O = L-glutaminyl-tRNA(Gln) + L-glutamate + ADP + phosphate + H(+). It catalyses the reaction L-aspartyl-tRNA(Asn) + L-glutamine + ATP + H2O = L-asparaginyl-tRNA(Asn) + L-glutamate + ADP + phosphate + 2 H(+). Functionally, allows the formation of correctly charged Asn-tRNA(Asn) or Gln-tRNA(Gln) through the transamidation of misacylated Asp-tRNA(Asn) or Glu-tRNA(Gln) in organisms which lack either or both of asparaginyl-tRNA or glutaminyl-tRNA synthetases. The reaction takes place in the presence of glutamine and ATP through an activated phospho-Asp-tRNA(Asn) or phospho-Glu-tRNA(Gln). The chain is Aspartyl/glutamyl-tRNA(Asn/Gln) amidotransferase subunit B from Borrelia recurrentis (strain A1).